Reading from the N-terminus, the 195-residue chain is Cysteine/O-acetylserine efflux protein (195 aa).

5 helical membrane-spanning segments follow: residues 47-67 (SLGF…LAVI), 70-90 (AAVH…AWKI), 105-125 (ISFW…LYGV), 142-162 (VVGV…CWAL), and 177-194 (QLNI…VRIF).

This sequence belongs to the Rht family.

The protein localises to the cell inner membrane. It carries out the reaction O-acetyl-L-serine(in) = O-acetyl-L-serine(out). It catalyses the reaction L-cysteine(in) = L-cysteine(out). In terms of biological role, exporter of O-acetylserine (OAS) and cysteine. The chain is Cysteine/O-acetylserine efflux protein (eamB) from Shigella boydii serotype 4 (strain Sb227).